The primary structure comprises 1770 residues: Probable outer membrane protein PmpC (1770 aa).

Residues 1 to 20 form the signal peptide; the sequence is MKFMSATAVFAAALSSVTEA. Disordered regions lie at residues 73–109, 264–311, 481–505, 611–818, and 1271–1329; these read LPRK…ELDN, EDTL…GKGG, PAAP…TNSD, ESTP…STTE, and LRII…TSRT. Residues 85–97 are compositionally biased toward low complexity; it reads SPTTEGVSSSSSG. The segment covering 268–285 has biased composition (polar residues); that stretch reads DSTPETEQTESNGNQDGS. 2 stretches are compositionally biased toward low complexity: residues 294–303 and 496–505; these read SESPESTPSP and QTETSDTNSD. Polar residues-rich tracts occupy residues 631–675 and 682–703; these read TEDP…TGNA and QDST…QSNE. Low complexity-rich tracts occupy residues 719 to 748 and 762 to 802; these read ESVS…GDQS and STDS…GDSA. Residues 1303–1319 show a composition bias toward polar residues; the sequence is NNDASNQGESANGSSSP. Residues 1477 to 1770 enclose the Autotransporter domain; it reads EEVSYNNLWI…MMNCGARMTF (294 aa).

Belongs to the PMP outer membrane protein family.

It localises to the secreted. The protein localises to the cell wall. Its subcellular location is the cell outer membrane. The sequence is that of Probable outer membrane protein PmpC (pmpC) from Chlamydia trachomatis serovar D (strain ATCC VR-885 / DSM 19411 / UW-3/Cx).